A 1298-amino-acid chain; its full sequence is DNA-directed RNA polymerase subunit beta' (1298 aa).

Zn(2+) is bound by residues Cys60, Cys62, Cys75, and Cys78. Residues Asp535, Asp537, and Asp539 each coordinate Mg(2+). 4 residues coordinate Zn(2+): Cys877, Cys954, Cys961, and Cys964.

It belongs to the RNA polymerase beta' chain family. In terms of assembly, the RNAP catalytic core consists of 2 alpha, 1 beta, 1 beta' and 1 omega subunit. When a sigma factor is associated with the core the holoenzyme is formed, which can initiate transcription. It depends on Mg(2+) as a cofactor. The cofactor is Zn(2+).

It catalyses the reaction RNA(n) + a ribonucleoside 5'-triphosphate = RNA(n+1) + diphosphate. Its function is as follows. DNA-dependent RNA polymerase catalyzes the transcription of DNA into RNA using the four ribonucleoside triphosphates as substrates. The protein is DNA-directed RNA polymerase subunit beta' of Micrococcus luteus (strain ATCC 4698 / DSM 20030 / JCM 1464 / CCM 169 / CCUG 5858 / IAM 1056 / NBRC 3333 / NCIMB 9278 / NCTC 2665 / VKM Ac-2230) (Micrococcus lysodeikticus).